The sequence spans 250 residues: MEMKKRISLELRNRTPAEVAELVVDNCRSSDGEIEGLTDDFKELEFLSMVNVGLTSLAKLPSLPKLRKLELSDNNISGTLETLAEKCANLTYLNLSGNKIKELSTLEALQNLKNLKSLDLFNCEITTLEDYRESIFELLPQVTYLDGFDAEDNEAPDSEADDDDDDEDGDEGAGQLGEYEEEEEEDEEGSEGGEVGLSYLMKEDIQDEEDDDDYVEEEEEEGGEEEADVRGEKRKREAEDEGEDDDEDDD.

Phosphoserine is present on Ser-8. 3 LRR repeats span residues 43 to 64 (ELEFLSMVNVGLTSLAKLPSLP), 65 to 87 (KLRKLELSDNNISGTLETLAEKC), and 89 to 110 (NLTYLNLSGNKIKELSTLEALQ). Residues 123 to 161 (CEITTLEDYRESIFELLPQVTYLDGFDAEDNEAPDSEAD) enclose the LRRCT domain. Acidic residues-rich tracts occupy residues 149-171 (DAEDNEAPDSEADDDDDDEDGDE), 178-191 (EYEEEEEEDEEGSE), and 205-227 (IQDEEDDDDYVEEEEEEGGEEEA). The tract at residues 149–250 (DAEDNEAPDS…EGEDDDEDDD (102 aa)) is disordered. Residues 194–247 (EVGLSYLMKEDIQDEEDDDDYVEEEEEEGGEEEADVRGEKRKREAEDEGEDDDE) form a ZID domain region. Basic and acidic residues predominate over residues 228 to 238 (DVRGEKRKREA). The span at 239-250 (EDEGEDDDEDDD) shows a compositional bias: acidic residues.

Belongs to the ANP32 family. As to quaternary structure, component of a SWR1-like complex. Interacts with H2A.Z/H2AZ1. Phosphorylated. The phosphorylation is nuclear localization signal (NLS)-dependent.

The protein localises to the cytoplasm. It is found in the nucleus. In terms of biological role, histone chaperone that specifically mediates the genome-wide removal of histone H2A.Z/H2AZ1 from the nucleosome: removes H2A.Z/H2AZ1 from its normal sites of deposition, especially from enhancer and insulator regions. Not involved in deposition of H2A.Z/H2AZ1 in the nucleosome. May stabilize the evicted H2A.Z/H2AZ1-H2B dimer, thus shifting the equilibrium towards dissociation and the off-chromatin state. Inhibits activity of protein phosphatase 2A (PP2A). Does not inhibit protein phosphatase 1. May play a role in cerebellar development and synaptogenesis. This Danio rerio (Zebrafish) protein is Acidic leucine-rich nuclear phosphoprotein 32 family member E (anp32e).